We begin with the raw amino-acid sequence, 329 residues long: NADH-quinone oxidoreductase subunit H 2 (329 aa).

The next 8 membrane-spanning stretches (helical) occupy residues 12-32, 78-98, 120-140, 159-179, 191-211, 242-262, 270-290, and 309-329; these read GAKIALIFFVVLTLAAYLVFA, WLFYLAPAMAAVPAILTFAVI, VGLLFFLALSSIAVYGVALGG, LISYELSMGLSLVPTVMLAGS, GVWFIAYQPVAFLIFLISIAA, LFFVGEYINIIVLGGLATTFF, LLPPFVWFSVKTLAFAFFFIW, and KVLTPLALLNILITGWVLMFV.

This sequence belongs to the complex I subunit 1 family. In terms of assembly, NDH-1 is composed of 14 different subunits. Subunits NuoA, H, J, K, L, M, N constitute the membrane sector of the complex.

The protein localises to the cell inner membrane. The enzyme catalyses a quinone + NADH + 5 H(+)(in) = a quinol + NAD(+) + 4 H(+)(out). Functionally, NDH-1 shuttles electrons from NADH, via FMN and iron-sulfur (Fe-S) centers, to quinones in the respiratory chain. The immediate electron acceptor for the enzyme in this species is believed to be ubiquinone. Couples the redox reaction to proton translocation (for every two electrons transferred, four hydrogen ions are translocated across the cytoplasmic membrane), and thus conserves the redox energy in a proton gradient. This subunit may bind ubiquinone. The polypeptide is NADH-quinone oxidoreductase subunit H 2 (Geobacter sulfurreducens (strain ATCC 51573 / DSM 12127 / PCA)).